The sequence spans 127 residues: Large ribosomal subunit protein bL20 (127 aa).

Belongs to the bacterial ribosomal protein bL20 family.

Functionally, binds directly to 23S ribosomal RNA and is necessary for the in vitro assembly process of the 50S ribosomal subunit. It is not involved in the protein synthesizing functions of that subunit. This is Large ribosomal subunit protein bL20 from Bifidobacterium animalis subsp. lactis (strain AD011).